Here is a 265-residue protein sequence, read N- to C-terminus: Lipopolysaccharide core heptose(I) kinase WaaP (265 aa).

Asp-162 is a catalytic residue.

This sequence belongs to the protein kinase superfamily. KdkA/RfaP family. It depends on Mg(2+) as a cofactor.

The enzyme catalyses an L-alpha-D-Hep-(1-&gt;3)-L-alpha-D-Hep-(1-&gt;5)-[alpha-Kdo-(2-&gt;4)]-alpha-Kdo-(2-&gt;6)-lipid A + ATP = an L-alpha-D-Hep-(1-&gt;3)-4-O-phospho-L-alpha-D-Hep-(1-&gt;5)-[alpha-Kdo-(2-&gt;4)]-alpha-Kdo-(2-&gt;6)-lipid A + ADP + H(+). The catalysed reaction is L-alpha-D-Hep-(1-&gt;3)-L-alpha-D-Hep-(1-&gt;5)-[alpha-Kdo-(2-&gt;4)]-alpha-Kdo-(2-&gt;6)-lipid A (E. coli) + ATP = L-alpha-D-Hep-(1-&gt;3)-4-O-phospho-L-alpha-D-Hep-(1-&gt;5)-[alpha-Kdo-(2-&gt;4)]-alpha-Kdo-(2-&gt;6)-lipid A (E. coli) + ADP + H(+). It participates in bacterial outer membrane biogenesis; LPS core biosynthesis. Kinase involved in the biosynthesis of the core oligosaccharide region of lipopolysaccharide (LPS). Catalyzes the phosphorylation of heptose I (HepI), the first heptose added to the Kdo2-lipid A module. In Escherichia coli (strain K12), this protein is Lipopolysaccharide core heptose(I) kinase WaaP.